Consider the following 194-residue polypeptide: Imidazoleglycerol-phosphate dehydratase (194 aa).

Belongs to the imidazoleglycerol-phosphate dehydratase family.

The protein resides in the cytoplasm. It catalyses the reaction D-erythro-1-(imidazol-4-yl)glycerol 3-phosphate = 3-(imidazol-4-yl)-2-oxopropyl phosphate + H2O. It functions in the pathway amino-acid biosynthesis; L-histidine biosynthesis; L-histidine from 5-phospho-alpha-D-ribose 1-diphosphate: step 6/9. The chain is Imidazoleglycerol-phosphate dehydratase from Lacticaseibacillus casei (strain BL23) (Lactobacillus casei).